The primary structure comprises 203 residues: Acireductone dioxygenase 3 (203 aa).

The Fe(2+) site is built by H96, H98, E102, and H141. 4 residues coordinate Ni(2+): H96, H98, E102, and H141.

It belongs to the acireductone dioxygenase (ARD) family. Requires Fe(2+) as cofactor. The cofactor is Ni(2+).

The protein resides in the cytoplasm. The protein localises to the nucleus. The enzyme catalyses 1,2-dihydroxy-5-(methylsulfanyl)pent-1-en-3-one + O2 = 4-methylsulfanyl-2-oxobutanoate + formate + 2 H(+). It carries out the reaction 1,2-dihydroxy-5-(methylsulfanyl)pent-1-en-3-one + O2 = 3-(methylsulfanyl)propanoate + CO + formate + 2 H(+). The protein operates within amino-acid biosynthesis; L-methionine biosynthesis via salvage pathway; L-methionine from S-methyl-5-thio-alpha-D-ribose 1-phosphate: step 5/6. Functionally, catalyzes 2 different reactions between oxygen and the acireductone 1,2-dihydroxy-3-keto-5-methylthiopentene (DHK-MTPene) depending upon the metal bound in the active site. Fe-containing acireductone dioxygenase (Fe-ARD) produces formate and 2-keto-4-methylthiobutyrate (KMTB), the alpha-ketoacid precursor of methionine in the methionine recycle pathway. Ni-containing acireductone dioxygenase (Ni-ARD) produces methylthiopropionate, carbon monoxide and formate, and does not lie on the methionine recycle pathway. The protein is Acireductone dioxygenase 3 of Physcomitrium patens (Spreading-leaved earth moss).